The chain runs to 39 residues: Cytochrome b559 subunit beta (39 aa).

A helical membrane pass occupies residues 14–30 (WLAVHGLAVPTVFFLGS). Histidine 18 contacts heme.

It belongs to the PsbE/PsbF family. Heterodimer of an alpha subunit and a beta subunit. PSII is composed of 1 copy each of membrane proteins PsbA, PsbB, PsbC, PsbD, PsbE, PsbF, PsbH, PsbI, PsbJ, PsbK, PsbL, PsbM, PsbT, PsbX, PsbY, PsbZ, Psb30/Ycf12, at least 3 peripheral proteins of the oxygen-evolving complex and a large number of cofactors. It forms dimeric complexes. Requires heme b as cofactor.

It is found in the plastid. Its subcellular location is the chloroplast thylakoid membrane. Its function is as follows. This b-type cytochrome is tightly associated with the reaction center of photosystem II (PSII). PSII is a light-driven water:plastoquinone oxidoreductase that uses light energy to abstract electrons from H(2)O, generating O(2) and a proton gradient subsequently used for ATP formation. It consists of a core antenna complex that captures photons, and an electron transfer chain that converts photonic excitation into a charge separation. This chain is Cytochrome b559 subunit beta, found in Welwitschia mirabilis (Tree tumbo).